The chain runs to 295 residues: MNIKINEYYIPTSLSGPYGITAGIDEALWFTENKANKIGRITVKGEIEEYLVPSQDAGLSIIVSGTNGDLWFSEYNANKIGKITIKGEIVEYSIPTADSGPFGITEGPDGAIWFTELTGNKIGRISNLGEVIEYKLPNDSSYPSSIVCGSDGVLWFTENQGNKIGKITMLGEITEYTIPTIGSGPVGITSGPDGALWFVEINGNRIGRITTEGIINEYDLKTVKARPHAIITGSDGALWFTQWGSNQIGRITTSGEVSEYEIPTANSEPHGIAVGPDKAIWFAEECNKIGQLILL.

Position 228 (H228) interacts with substrate. E268 serves as a coordination point for Mg(2+). The Proton acceptor role is filled by H270. Mg(2+) is bound at residue E285.

It belongs to the Vgb family. Monomer. Mg(2+) serves as cofactor.

Functionally, inactivates the type B streptogramin antibiotics by linearizing the lactone ring at the ester linkage, generating a free phenylglycine carboxylate and converting the threonyl moiety into 2-amino-butenoic acid. In Clostridium beijerinckii (strain ATCC 51743 / NCIMB 8052) (Clostridium acetobutylicum), this protein is Virginiamycin B lyase.